The sequence spans 1126 residues: Protein translocase subunit SecA (1126 aa).

ATP is bound by residues Q175, G193–T197, and D694. The segment at V1060–L1126 is disordered. Basic and acidic residues predominate over residues A1064 to D1080. Residues C1110, C1112, C1121, and H1122 each coordinate Zn(2+).

The protein belongs to the SecA family. In terms of assembly, monomer and homodimer. Part of the essential Sec protein translocation apparatus which comprises SecA, SecYEG and auxiliary proteins SecDF. Other proteins may also be involved. Zn(2+) is required as a cofactor.

Its subcellular location is the cell inner membrane. The protein localises to the cytoplasm. It carries out the reaction ATP + H2O + cellular proteinSide 1 = ADP + phosphate + cellular proteinSide 2.. In terms of biological role, part of the Sec protein translocase complex. Interacts with the SecYEG preprotein conducting channel. Has a central role in coupling the hydrolysis of ATP to the transfer of proteins into and across the cell membrane, serving as an ATP-driven molecular motor driving the stepwise translocation of polypeptide chains across the membrane. In Parabacteroides distasonis (strain ATCC 8503 / DSM 20701 / CIP 104284 / JCM 5825 / NCTC 11152), this protein is Protein translocase subunit SecA.